A 354-amino-acid polypeptide reads, in one-letter code: Peptide chain release factor 1 (354 aa).

Glutamine 233 carries the post-translational modification N5-methylglutamine.

This sequence belongs to the prokaryotic/mitochondrial release factor family. Methylated by PrmC. Methylation increases the termination efficiency of RF1.

It is found in the cytoplasm. Its function is as follows. Peptide chain release factor 1 directs the termination of translation in response to the peptide chain termination codons UAG and UAA. This Clostridioides difficile (strain 630) (Peptoclostridium difficile) protein is Peptide chain release factor 1.